A 372-amino-acid chain; its full sequence is Riboflavin biosynthesis protein RibD (372 aa).

The segment at 1-150 (MLEFSSQDCV…KGFLKRMRQG (150 aa)) is deaminase. Residues 6 to 128 (SQDCVFMQRA…MLSDAGIEST (123 aa)) form the CMP/dCMP-type deaminase domain. Position 55 (H55) interacts with Zn(2+). Residue E57 is the Proton donor of the active site. The Zn(2+) site is built by C80 and C89. The tract at residues 151–372 (MPFVQLKLAM…IKLTYTPKGV (222 aa)) is reductase. Residues A159 and 166 to 169 (TAMA) each bind NADP(+). A substrate-binding site is contributed by S173. W175 serves as a coordination point for NADP(+). Substrate is bound at residue R189. T201 and D205 together coordinate NADP(+). Substrate contacts are provided by L209 and R212. S239 is an NADP(+) binding site. E302 contributes to the substrate binding site. 304-310 (GANLSGS) is an NADP(+) binding site.

In the N-terminal section; belongs to the cytidine and deoxycytidylate deaminase family. The protein in the C-terminal section; belongs to the HTP reductase family. It depends on Zn(2+) as a cofactor.

The enzyme catalyses 2,5-diamino-6-hydroxy-4-(5-phosphoribosylamino)-pyrimidine + H2O + H(+) = 5-amino-6-(5-phospho-D-ribosylamino)uracil + NH4(+). It carries out the reaction 5-amino-6-(5-phospho-D-ribitylamino)uracil + NADP(+) = 5-amino-6-(5-phospho-D-ribosylamino)uracil + NADPH + H(+). It functions in the pathway cofactor biosynthesis; riboflavin biosynthesis; 5-amino-6-(D-ribitylamino)uracil from GTP: step 2/4. The protein operates within cofactor biosynthesis; riboflavin biosynthesis; 5-amino-6-(D-ribitylamino)uracil from GTP: step 3/4. Functionally, converts 2,5-diamino-6-(ribosylamino)-4(3h)-pyrimidinone 5'-phosphate into 5-amino-6-(ribosylamino)-2,4(1h,3h)-pyrimidinedione 5'-phosphate. The protein is Riboflavin biosynthesis protein RibD (ribD) of Haemophilus influenzae (strain ATCC 51907 / DSM 11121 / KW20 / Rd).